The primary structure comprises 359 residues: Alanine racemase, biosynthetic (359 aa).

The active-site Proton acceptor; specific for D-alanine is lysine 34. Lysine 34 is subject to N6-(pyridoxal phosphate)lysine. Arginine 129 is a substrate binding site. The Proton acceptor; specific for L-alanine role is filled by tyrosine 255. Methionine 303 lines the substrate pocket.

This sequence belongs to the alanine racemase family. Pyridoxal 5'-phosphate serves as cofactor.

The catalysed reaction is L-alanine = D-alanine. Its pathway is amino-acid biosynthesis; D-alanine biosynthesis; D-alanine from L-alanine: step 1/1. It participates in cell wall biogenesis; peptidoglycan biosynthesis. Its function is as follows. Catalyzes the interconversion of L-alanine and D-alanine. Provides the D-alanine required for cell wall biosynthesis. This is Alanine racemase, biosynthetic (alr) from Salmonella typhi.